Consider the following 1673-residue polypeptide: Protein TIC 214 (1673 aa).

A run of 6 helical transmembrane segments spans residues Ala32–Ile52, Leu70–Phe90, Pro93–Leu113, Leu130–Phe150, Met170–Cys190, and Phe218–Leu238. 2 stretches are compositionally biased toward basic and acidic residues: residues Leu264–Thr276 and Ser283–Glu298. 4 disordered regions span residues Leu264–Glu302, Val547–Arg611, Asn1120–Leu1146, and Gln1370–Asp1433. Over residues Asp562 to Pro586 the composition is skewed to polar residues. The span at Thr597–Arg611 shows a compositional bias: basic and acidic residues. The span at Asn1120–Leu1135 shows a compositional bias: polar residues. Low complexity predominate over residues Gln1370 to Asn1379. Composition is skewed to basic and acidic residues over residues Thr1380–Glu1399 and Thr1406–Glu1423.

It belongs to the TIC214 family. In terms of assembly, part of the Tic complex.

The protein localises to the plastid. It is found in the chloroplast inner membrane. In terms of biological role, involved in protein precursor import into chloroplasts. May be part of an intermediate translocation complex acting as a protein-conducting channel at the inner envelope. The sequence is that of Protein TIC 214 from Cuscuta gronovii (Common dodder).